The primary structure comprises 428 residues: Probable pectin lyase F (428 aa).

The first 20 residues, 1-20 (MVLLHPLLTAAALLGASARA), serve as a signal peptide directing secretion. The cysteines at positions 83 and 107 are disulfide-linked. Residue arginine 257 is part of the active site. N-linked (GlcNAc...) asparagine glycosylation occurs at asparagine 276. Cysteine 324 and cysteine 332 are disulfide-bonded. Positions 383–428 (GSGGSGAASSSVSITPSPTSSAIPSSSATPSSSAYARRHYARHHHY) are disordered. A compositionally biased stretch (low complexity) spans 389–417 (AASSSVSITPSPTSSAIPSSSATPSSSAY). The segment covering 418–428 (ARRHYARHHHY) has biased composition (basic residues).

Belongs to the polysaccharide lyase 1 family.

Its subcellular location is the secreted. The enzyme catalyses Eliminative cleavage of (1-&gt;4)-alpha-D-galacturonan methyl ester to give oligosaccharides with 4-deoxy-6-O-methyl-alpha-D-galact-4-enuronosyl groups at their non-reducing ends.. In terms of biological role, pectinolytic enzymes consist of four classes of enzymes: pectin lyase, polygalacturonase, pectin methylesterase and rhamnogalacturonase. Among pectinolytic enzymes, pectin lyase is the most important in depolymerization of pectin, since it cleaves internal glycosidic bonds of highly methylated pectins. The chain is Probable pectin lyase F (pelF) from Aspergillus oryzae (strain ATCC 42149 / RIB 40) (Yellow koji mold).